A 211-amino-acid polypeptide reads, in one-letter code: Superoxide dismutase [Fe] (211 aa).

Fe cation-binding residues include histidine 34, histidine 85, aspartate 171, and histidine 175.

Belongs to the iron/manganese superoxide dismutase family. In terms of assembly, homotetramer at high temperature; homodimer at room temperature. It depends on Fe cation as a cofactor.

The protein localises to the cytoplasm. The catalysed reaction is 2 superoxide + 2 H(+) = H2O2 + O2. Destroys superoxide anion radicals which are normally produced within the cells and which are toxic to biological systems. The polypeptide is Superoxide dismutase [Fe] (sod) (Sulfolobus acidocaldarius (strain ATCC 33909 / DSM 639 / JCM 8929 / NBRC 15157 / NCIMB 11770)).